Here is a 508-residue protein sequence, read N- to C-terminus: Lysine--tRNA ligase (508 aa).

Mg(2+) is bound by residues Glu-418 and Glu-425.

Belongs to the class-II aminoacyl-tRNA synthetase family. Homodimer. The cofactor is Mg(2+).

The protein localises to the cytoplasm. The catalysed reaction is tRNA(Lys) + L-lysine + ATP = L-lysyl-tRNA(Lys) + AMP + diphosphate. This Burkholderia vietnamiensis (strain G4 / LMG 22486) (Burkholderia cepacia (strain R1808)) protein is Lysine--tRNA ligase.